Reading from the N-terminus, the 412-residue chain is Putative potassium channel protein RPA4233 (412 aa).

Helical transmembrane passes span 35–55 (FIVFFIVLSVGITVMESVPAM), 65–85 (ALELLCLVMFSIEYYIRIWIA), 164–184 (LMACLVILACATLVSATAMHI), 202–222 (WWAIVTLSTIGYGDVVPATGI), and 225–245 (MVASATIICGLIMIALPVGIV). A Selectivity filter motif is present at residues 210–215 (TIGYGD). 270–388 (LFSHLTAGDI…RKINQIVEGR (119 aa)) lines the a nucleoside 3',5'-cyclic phosphate pocket.

It belongs to the potassium channel family.

The protein resides in the cell membrane. The polypeptide is Putative potassium channel protein RPA4233 (Rhodopseudomonas palustris (strain ATCC BAA-98 / CGA009)).